The chain runs to 781 residues: uncharacterized protein (781 aa).

The disordered stretch occupies residues 1–34; that stretch reads MNIAEEPSDEVISSGPEDTDICSQQTSASAEAGD. Phosphoserine is present on Ser29. 2 consecutive RRM domains span residues 195–273 and 295–418; these read GNIF…YHVE and RCLF…KAVQ. Residues 345–375 form a disordered region; that stretch reads SNTRSSSSVSFNEEGSVESNKSSNNTNGNAQ. The span at 347–364 shows a compositional bias: low complexity; sequence TRSSSSVSFNEEGSVESN. A compositionally biased stretch (polar residues) spans 365–374; that stretch reads KSSNNTNGNA. Phosphoserine is present on residues Ser433, Ser435, Ser482, and Ser485. Residue Thr486 is modified to Phosphothreonine. At Ser501 the chain carries Phosphoserine. The region spanning 540 to 638 is the RRM 3 domain; that stretch reads SNLYVKHIPL…QVLSVSFAQK (99 aa). The disordered stretch occupies residues 640–668; sequence GNLSSSDDDDQSQTDNSSKFQNFQPHNDY.

Interacts with RBG1.

This is an uncharacterized protein from Saccharomyces cerevisiae (strain ATCC 204508 / S288c) (Baker's yeast).